The following is a 439-amino-acid chain: Ornithine aminotransferase, mitochondrial (439 aa).

The transit peptide at 1–25 (MLSKLASLQTIAALRRGVHTSVASA) directs the protein to the mitochondrion. 2 positions are modified to N6-acetyllysine: Lys-49 and Lys-66. Lys-102 carries the post-translational modification N6-succinyllysine. Lys-107 bears the N6-acetyllysine; alternate mark. Lys-107 bears the N6-succinyllysine; alternate mark. Lys-292 is modified (N6-(pyridoxal phosphate)lysine). N6-acetyllysine; alternate is present on Lys-362. At Lys-362 the chain carries N6-succinyllysine; alternate. N6-acetyllysine is present on residues Lys-386 and Lys-392. Position 405 is an N6-acetyllysine; alternate (Lys-405). Lys-405 bears the N6-succinyllysine; alternate mark. Lys-421 carries the N6-acetyllysine modification.

Belongs to the class-III pyridoxal-phosphate-dependent aminotransferase family. Homohexamer. Pyridoxal 5'-phosphate serves as cofactor.

The protein localises to the mitochondrion matrix. The catalysed reaction is L-ornithine + 2-oxoglutarate = L-glutamate 5-semialdehyde + L-glutamate. It functions in the pathway amino-acid biosynthesis; L-proline biosynthesis; L-glutamate 5-semialdehyde from L-ornithine: step 1/1. In terms of biological role, catalyzes the reversible interconversion of L-ornithine and 2-oxoglutarate to L-glutamate semialdehyde and L-glutamate. The sequence is that of Ornithine aminotransferase, mitochondrial (Oat) from Mus musculus (Mouse).